A 551-amino-acid polypeptide reads, in one-letter code: Solute carrier family 22 member 4 (551 aa).

The Cytoplasmic segment spans residues 1–20 (MRDYDEAIAFLGEWGPFQRL). A helical transmembrane segment spans residues 21–41 (IFFLLSASIIPNGFNGMSVVF). Residues 42–141 (LAGTPEHRCR…WNLVCEDNWK (100 aa)) are Extracellular-facing. Residues Asn-57, Asn-64, and Asn-91 are each glycosylated (N-linked (GlcNAc...) asparagine). The helical transmembrane segment at 142–162 (VPLTTSLFFVGVLLGSFVSGQ) threads the bilayer. At 163–171 (LSDRFGRKN) the chain is on the cytoplasmic side. The chain crosses the membrane as a helical span at residues 172 to 192 (VLFATMAVQTGFSFLQIFSIS). The Extracellular segment spans residues 193-197 (WEMFT). Residues 198–218 (VLFLIVGMGQISNYVVAFILG) form a helical membrane-spanning segment. ATP is bound at residue 218–225 (GTEILGKS). Over 219–232 (TEILGKSVRIIFST) the chain is Cytoplasmic. Residues 233–253 (LGVCTFFAVGYMLLPLFAYFI) traverse the membrane as a helical segment. Residues 254-257 (RDWR) are Extracellular-facing. A helical membrane pass occupies residues 258–278 (MLLLALTVPGVLCVPLWWFIP). At 279-337 (ESPRWLISQRRFREAEDIIQKAAKMNNIAVPAVIFDSVEELNPLKQQKAFILDLFRTWN) the chain is on the cytoplasmic side. Residues 338 to 358 (IAIMTIMSLLLWMLTSVGYFA) form a helical membrane-spanning segment. At 359–371 (LSLDTPNLHGDAY) the chain is on the extracellular side. The chain crosses the membrane as a helical span at residues 372-392 (LNCFLSALIEIPAYITAWLLL). Residues 393-399 (RTLPRRY) lie on the Cytoplasmic side of the membrane. Residues 400–420 (IIAAVLFWGGGVLLFIQLVPV) traverse the membrane as a helical segment. Residues 421–426 (DYYFLS) lie on the Extracellular side of the membrane. The helical transmembrane segment at 427–447 (IGLVMLGKFGITSAFSMLYVF) threads the bilayer. The Cytoplasmic segment spans residues 448-460 (TAELYPTMVRNMA). The helical transmembrane segment at 461-481 (VGVTSMASRVGSIIAPYFVYL) threads the bilayer. At 482 to 486 (GAYNR) the chain is on the extracellular side. The chain crosses the membrane as a helical span at residues 487-507 (MLPYIVMGSLTVLIGILTLFF). Over 508–551 (PESLGMTLPETLEQMQKVKWFRSGKKTRDSMETEENPKVLITAF) the chain is Cytoplasmic.

This sequence belongs to the major facilitator (TC 2.A.1) superfamily. Organic cation transporter (TC 2.A.1.19) family. As to quaternary structure, interacts with PDZK1.

It is found in the apical cell membrane. The protein localises to the basal cell membrane. It localises to the mitochondrion membrane. The catalysed reaction is ergothioneine(out) + Na(+)(out) = ergothioneine(in) + Na(+)(in). It carries out the reaction acetylcholine(in) = acetylcholine(out). It catalyses the reaction (R)-carnitine(out) + Na(+)(out) = (R)-carnitine(in) + Na(+)(in). The enzyme catalyses glycine betaine(out) + Na(+)(out) = glycine betaine(in) + Na(+)(in). With respect to regulation, allosterically activated by intracellular ATP. Transporter that mediates the transport of endogenous and microbial zwitterions and organic cations. Functions as a Na(+)-dependent and pH-dependent high affinity microbial symporter of potent food-derived antioxidant ergothioeine. Transports one sodium ion with one ergothioeine molecule. Involved in the absorption of ergothioneine from the luminal/apical side of the small intestine and renal tubular cells, and into non-parenchymal liver cells, thereby contributing to maintain steady-state ergothioneine level in the body. Also mediates the bidirectional transport of acetycholine, although the exact transport mechanism has not been fully identified yet. Most likely exports anti-inflammatory acetylcholine in non-neuronal tissues, thereby contributing to the non-neuronal cholinergic system. Displays a general physiological role linked to better survival by controlling inflammation and oxidative stress, which may be related to ergothioneine and acetycholine transports. May also function as a low-affinity Na(+)-dependent transporter of L-carnitine through the mitochondrial membrane, thereby maintaining intracellular carnitine homeostasis. May contribute to regulate the transport of cationic compounds in testis across the blood-testis-barrier. The protein is Solute carrier family 22 member 4 (SLC22A4) of Papio anubis (Olive baboon).